The sequence spans 76 residues: Putative antitoxin VapB2 (76 aa).

The protein belongs to the UPF0330 family.

Functionally, possibly the antitoxin component of a type II toxin-antitoxin (TA) system. Its cognate toxin is VapC2 (Potential). In Pyrococcus abyssi (strain GE5 / Orsay), this protein is Putative antitoxin VapB2 (vapB2).